A 111-amino-acid chain; its full sequence is UPF0339 protein in ptx operon 5'region (111 aa).

2 consecutive repeat copies span residues 10–58 and 61–109.

Belongs to the UPF0339 family. Duplicated subfamily.

The sequence is that of UPF0339 protein in ptx operon 5'region from Stutzerimonas stutzeri (Pseudomonas stutzeri).